We begin with the raw amino-acid sequence, 288 residues long: MKLQIIWLALVLIAVETYAVKQGKNVTIPALIVFGDSIMDTGNNNNLPTLLKCNFPPYGKDYPGGFATGRFSDGRVPSDLIAEKLGLVKTLPAYMNPYLKPHDLLKGVTFASGGTGYDPLTAKIMSVISVWDQLIYFKEYISKIKRHFGEEKAKDILEHSFFLVVSSSNDLAHTYLAQAHRYDRTSYANFLADSAVHFVRELHKLGARKIGVFSAVPVGCVPLQRTVFGGFFTRGCNQPLNNMAKQFNARLSPALDSLDKELDGVIIYINVYDTLFDMIQHPKKYGRF.

Positions 1–19 (MKLQIIWLALVLIAVETYA) are cleaved as a signal peptide. N25 carries an N-linked (GlcNAc...) asparagine glycan. Residue S37 is the Nucleophile of the active site.

The protein belongs to the 'GDSL' lipolytic enzyme family.

It is found in the secreted. This chain is GDSL esterase/lipase At3g43550, found in Arabidopsis thaliana (Mouse-ear cress).